The following is a 484-amino-acid chain: ATP-dependent rRNA helicase RRP3 (484 aa).

Polar residues predominate over residues 1–10 (MAIVGSNSVS). Residues 1–61 (MAIVGSNSVS…SSQKSKNIVE (61 aa)) are disordered. Basic and acidic residues predominate over residues 18–54 (RNDARDLAEKIKRNALKKQEQDKKQQLEEESKPESSQ). The Q motif motif lies at 71–99 (STFSELKLVPELLEAIQQMKFSKPTPIQS). The Helicase ATP-binding domain occupies 102–273 (IPHALEGKDI…RASLHNPVRV (172 aa)). Residue 115–122 (AQTGSGKT) participates in ATP binding. The short motif at 221-224 (DEAD) is the DEAD box element. The Helicase C-terminal domain occupies 300–444 (YLIHLLNEFV…KDPSPPKAML (145 aa)). Positions 460–484 (RQTKEFHEKTRRGRRGKDDKDREEH) are disordered. Positions 475 to 484 (GKDDKDREEH) are enriched in basic and acidic residues.

This sequence belongs to the DEAD box helicase family. DDX47/RRP3 subfamily. As to quaternary structure, interacts with the SSU processome.

The protein resides in the nucleus. It carries out the reaction ATP + H2O = ADP + phosphate + H(+). Functionally, ATP-dependent rRNA helicase required for pre-ribosomal RNA processing. Involved in the maturation of the 35S-pre-rRNA and to its cleavage to mature 18S rRNA. This Scheffersomyces stipitis (strain ATCC 58785 / CBS 6054 / NBRC 10063 / NRRL Y-11545) (Yeast) protein is ATP-dependent rRNA helicase RRP3.